The chain runs to 631 residues: DNA mismatch repair protein MutL (631 aa).

It belongs to the DNA mismatch repair MutL/HexB family.

Functionally, this protein is involved in the repair of mismatches in DNA. It is required for dam-dependent methyl-directed DNA mismatch repair. May act as a 'molecular matchmaker', a protein that promotes the formation of a stable complex between two or more DNA-binding proteins in an ATP-dependent manner without itself being part of a final effector complex. The chain is DNA mismatch repair protein MutL from Mannheimia succiniciproducens (strain KCTC 0769BP / MBEL55E).